The following is a 345-amino-acid chain: 3-dehydroquinate synthase (345 aa).

NAD(+)-binding positions include 86 to 90, 110 to 111, K123, and K132; these read GALLD and TT. Residues E165, H229, and H243 each contribute to the Zn(2+) site.

This sequence belongs to the sugar phosphate cyclases superfamily. Dehydroquinate synthase family. It depends on NAD(+) as a cofactor. The cofactor is Co(2+). Zn(2+) is required as a cofactor.

The protein resides in the cytoplasm. The catalysed reaction is 7-phospho-2-dehydro-3-deoxy-D-arabino-heptonate = 3-dehydroquinate + phosphate. The protein operates within metabolic intermediate biosynthesis; chorismate biosynthesis; chorismate from D-erythrose 4-phosphate and phosphoenolpyruvate: step 2/7. Functionally, catalyzes the conversion of 3-deoxy-D-arabino-heptulosonate 7-phosphate (DAHP) to dehydroquinate (DHQ). The sequence is that of 3-dehydroquinate synthase from Pyrobaculum aerophilum (strain ATCC 51768 / DSM 7523 / JCM 9630 / CIP 104966 / NBRC 100827 / IM2).